A 728-amino-acid chain; its full sequence is Probable LRR receptor-like serine/threonine-protein kinase At1g14390 (728 aa).

Positions 1 to 27 (MHSSSKSQAFSLTFLLFLFLLPSVSES) are cleaved as a signal peptide. Residues 28–356 (QLISSESRTL…EEDTGIELGL (329 aa)) lie on the Extracellular side of the membrane. N-linked (GlcNAc...) asparagine glycans are attached at residues asparagine 55 and asparagine 85. LRR repeat units lie at residues 74–96 (NGHVTELTVTGNRTVKLPGRFSS), 106–130 (LSNLKTLSLVSLGISGPLPSQIIRL), 131–155 (SSSLQSLNLSSNFISGNIPKEISSL), 157–178 (NLRSLVLANNLFNGSVPDLRGL), 179–202 (SNLQELNLGGNKLGPEVVPSLASN), 204–224 (ITISLKNNSFGSKIPEQIKKL), 225–248 (NKLQSLDLSSNKFTGSIPRFLLSL), 249–272 (PSLQNLSLAQNLLSGSLPNSSLCN), and 274–295 (KLRILDVSRNLLTGKLPSCFSS). Residues asparagine 138 and asparagine 169 are each glycosylated (N-linked (GlcNAc...) asparagine). A glycan (N-linked (GlcNAc...) asparagine) is linked at asparagine 210. 2 N-linked (GlcNAc...) asparagine glycosylation sites follow: asparagine 253 and asparagine 267. The chain crosses the membrane as a helical span at residues 357–377 (VIGIIIGVILVSAVLAGLVLV). Residues 378 to 728 (RMRKSRSKEE…ENLGLGGSEL (351 aa)) are Cytoplasmic-facing. Residues 421–709 (TMRSAVIGLS…DVVWNLQYTI (289 aa)) enclose the Protein kinase domain.

This sequence belongs to the protein kinase superfamily. Ser/Thr protein kinase family.

It is found in the membrane. The enzyme catalyses L-seryl-[protein] + ATP = O-phospho-L-seryl-[protein] + ADP + H(+). The catalysed reaction is L-threonyl-[protein] + ATP = O-phospho-L-threonyl-[protein] + ADP + H(+). The protein is Probable LRR receptor-like serine/threonine-protein kinase At1g14390 of Arabidopsis thaliana (Mouse-ear cress).